The chain runs to 597 residues: Centrosomal protein of 70 kDa (597 aa).

The tract at residues 1–23 (MFPVAPKPQDSSQASDRLMTEKQ) is disordered. 2 coiled-coil regions span residues 66-179 (MRQN…QMEV) and 254-326 (TYKG…KKAE). The TPR repeat unit spans residues 483–516 (NGVYPRMNEVYTRLGEMNNAVRNLQELLELDSSS).

In terms of assembly, directly interacts with tubulin-gamma; this interaction determines centrosomal localization.

The protein localises to the cytoplasm. Its subcellular location is the cytoskeleton. The protein resides in the microtubule organizing center. It localises to the centrosome. Plays a role in the organization of both preexisting and nascent microtubules in interphase cells. During mitosis, required for the organization and orientation of the mitotic spindle. The chain is Centrosomal protein of 70 kDa (CEP70) from Pongo abelii (Sumatran orangutan).